The sequence spans 122 residues: Acidic phospholipase A2 BlatPLA2 (122 aa).

Cystine bridges form between Cys26–Cys115, Cys28–Cys44, Cys43–Cys95, Cys49–Cys122, Cys50–Cys88, Cys57–Cys81, and Cys75–Cys86. Ca(2+) is bound by residues Tyr27, Gly29, and Gly31. His47 is an active-site residue. Position 48 (Asp48) interacts with Ca(2+). Asp89 is an active-site residue.

The protein belongs to the phospholipase A2 family. Group II subfamily. D49 sub-subfamily. In terms of assembly, monomer. It depends on Ca(2+) as a cofactor. Expressed by the venom gland.

The protein localises to the secreted. It catalyses the reaction a 1,2-diacyl-sn-glycero-3-phosphocholine + H2O = a 1-acyl-sn-glycero-3-phosphocholine + a fatty acid + H(+). Functionally, acidic phospholipase A2 (PLA2) that only causes a mild edema, when subcutaneously injected in the mice foot. PLA2 catalyzes the calcium-dependent hydrolysis of the 2-acyl groups in 3-sn-phosphoglycerides. The chain is Acidic phospholipase A2 BlatPLA2 from Bothriechis lateralis (Side-striped palm pitviper).